A 453-amino-acid polypeptide reads, in one-letter code: tRNA modification GTPase MnmE (453 aa).

(6S)-5-formyl-5,6,7,8-tetrahydrofolate is bound by residues Arg-22, Glu-79, and Lys-119. Positions 215–376 constitute a TrmE-type G domain; it reads GMKVVIAGRP…LREHLKACMG (162 aa). Position 225 (Asn-225) interacts with K(+). GTP-binding positions include 225–230, 244–250, 269–272, and 334–337; these read NAGKSS, TEIAGTT, DTAG, and NKAD. Ser-229 serves as a coordination point for Mg(2+). The K(+) site is built by Thr-244, Ile-246, and Thr-249. Thr-250 is a Mg(2+) binding site. Lys-453 lines the (6S)-5-formyl-5,6,7,8-tetrahydrofolate pocket.

This sequence belongs to the TRAFAC class TrmE-Era-EngA-EngB-Septin-like GTPase superfamily. TrmE GTPase family. Homodimer. Heterotetramer of two MnmE and two MnmG subunits. K(+) serves as cofactor.

It is found in the cytoplasm. In terms of biological role, exhibits a very high intrinsic GTPase hydrolysis rate. Involved in the addition of a carboxymethylaminomethyl (cmnm) group at the wobble position (U34) of certain tRNAs, forming tRNA-cmnm(5)s(2)U34. The sequence is that of tRNA modification GTPase MnmE from Aeromonas salmonicida (strain A449).